Here is a 105-residue protein sequence, read N- to C-terminus: ATP-dependent Clp protease adapter protein ClpS (105 aa).

Belongs to the ClpS family. In terms of assembly, binds to the N-terminal domain of the chaperone ClpA.

Involved in the modulation of the specificity of the ClpAP-mediated ATP-dependent protein degradation. This Aeromonas hydrophila subsp. hydrophila (strain ATCC 7966 / DSM 30187 / BCRC 13018 / CCUG 14551 / JCM 1027 / KCTC 2358 / NCIMB 9240 / NCTC 8049) protein is ATP-dependent Clp protease adapter protein ClpS.